The following is a 469-amino-acid chain: Serine/threonine-protein kinase orb6 (469 aa).

In terms of domain architecture, Protein kinase spans 93 to 392 (FSTIKVIGKG…AIEIMQHPFF (300 aa)). ATP-binding positions include 99-107 (IGKGAFGEV) and lysine 122. Aspartate 216 (proton acceptor) is an active-site residue. In terms of domain architecture, AGC-kinase C-terminal spans 393 to 467 (TGIDWDHIRE…KKFNYLTMKG (75 aa)).

Belongs to the protein kinase superfamily. Ser/Thr protein kinase family. Interacts with mob2.

It catalyses the reaction L-seryl-[protein] + ATP = O-phospho-L-seryl-[protein] + ADP + H(+). The enzyme catalyses L-threonyl-[protein] + ATP = O-phospho-L-threonyl-[protein] + ADP + H(+). Functionally, interacts with pak1/shk1 and coordinates cell morphogenesis with the cell cycle. It is essential for maintenance of cell polarity and is involved in mitotic control. The chain is Serine/threonine-protein kinase orb6 (orb6) from Schizosaccharomyces pombe (strain 972 / ATCC 24843) (Fission yeast).